A 238-amino-acid polypeptide reads, in one-letter code: Probable transcriptional regulatory protein CT_457 (238 aa).

A disordered region spans residues 1–21 (MAGHSKWANTKHRKERADHKK). Residues 9–21 (NTKHRKERADHKK) show a composition bias toward basic residues.

This sequence belongs to the TACO1 family.

Its subcellular location is the cytoplasm. The protein is Probable transcriptional regulatory protein CT_457 of Chlamydia trachomatis serovar D (strain ATCC VR-885 / DSM 19411 / UW-3/Cx).